We begin with the raw amino-acid sequence, 429 residues long: Protein ORF66 (429 aa).

It belongs to the herpesviridae UL49 family. As to quaternary structure, interacts with ORF34.

The protein resides in the host nucleus. The protein localises to the host cytoplasm. Functionally, participates in the expression of late viral mRNAs. The polypeptide is Protein ORF66 (ORF66) (Homo sapiens (Human)).